The chain runs to 472 residues: H(+)/Cl(-) exchange transporter ClcA (472 aa).

The Cytoplasmic portion of the chain corresponds to 1-32 (MKAETPSFEAHQFVRVRRGDAVRRLIQRDKTP). The chain crosses the membrane as a helical span at residues 33–69 (LAVLLMAAVVGTLAGLVGVAFEKSVNWVQNQRIGALA). Residues 70–76 (QVADHWY) lie on the Periplasmic side of the membrane. A helical membrane pass occupies residues 77 to 100 (LVWPLAFILSALLAMVGYFLVRRF). Positions 106–110 (GSGIP) match the Selectivity filter part_1 motif. Residue Ser-107 coordinates chloride. An intramembrane region (helical) is located at residues 109-116 (IPEIEGAL). The Cytoplasmic segment spans residues 117 to 123 (EELRPVR). Transmembrane regions (helical) follow at residues 124–141 (WWRV…TLGA) and 148–166 (EGPM…LDIF). The short motif at 146–150 (GREGP) is the Selectivity filter part_2 element. The Cytoplasmic segment spans residues 167 to 176 (RMRSPEARHT). Intramembrane regions (helical) lie at residues 177–189 (LLAT…LSAA) and 193–201 (PLAGILFII). Topologically, residues 202–214 (EEMRPQFRYNLIS) are cytoplasmic. The chain crosses the membrane as a helical span at residues 215–232 (IKAVFTGVIMSSIVFRIF). Residues 233–252 (NGEAAIIEVGKLSNAPVNTL) lie on the Periplasmic side of the membrane. Residues 253 to 281 (WLYLVLGMLFGCFGPLFNFLVLRTQDIFQ) traverse the membrane as a helical segment. Topologically, residues 282–287 (RIHGGN) are cytoplasmic. Residues 288–309 (IKTWVLMGGVIGGICGLLGLMQ) traverse the membrane as a helical segment. Topologically, residues 310-329 (PSAVGGGFNLIPIAAAGNFS) are periplasmic. Transmembrane regions (helical) follow at residues 330-349 (VGLL…ICFS) and 355-376 (GIFA…MAAI). The Selectivity filter part_3 signature appears at 355–359 (GIFAP). 2 residues coordinate chloride: Ile-356 and Phe-357. The Periplasmic segment spans residues 377–386 (PLFPAYHLDA). An intramembrane region (helical) is located at residues 387–401 (GTFAIAGMGALLAAS). Positions 402–404 (VRA) form an intramembrane region, note=Loop between two helices. The helical intramembrane region spans 405–416 (PLTGIVLVLEMT). The note=Loop between two helices intramembrane region spans 417-421 (DNYQL). The helical transmembrane segment at 422-438 (ILPMIITCLGATLLAQF) threads the bilayer. Topologically, residues 439–472 (LGGKPLYSTILQRTLAKQEAEQAAKAQQAPRENT) are cytoplasmic. Position 445 (Tyr-445) interacts with chloride.

It belongs to the chloride channel (TC 2.A.49) family. ClcA subfamily. Homodimer.

The protein resides in the cell inner membrane. The enzyme catalyses 2 chloride(in) + H(+)(out) = 2 chloride(out) + H(+)(in). In terms of biological role, proton-coupled chloride transporter. Functions as antiport system and exchanges two chloride ions for 1 proton. Probably acts as an electrical shunt for an outwardly-directed proton pump that is linked to amino acid decarboxylation, as part of the extreme acid resistance (XAR) response. The polypeptide is H(+)/Cl(-) exchange transporter ClcA (Klebsiella pneumoniae (strain 342)).